Here is a 514-residue protein sequence, read N- to C-terminus: Flagellin B (514 aa).

Belongs to the bacterial flagellin family. Heteromer of FlaA and FlaB. FlaB is located proximal to the hook while the remainder of the filament is composed of the predominant FlaA.

Its subcellular location is the secreted. The protein localises to the bacterial flagellum. In terms of biological role, flagellin is the subunit protein which polymerizes to form the filaments of bacterial flagella. Important for motility and virulence. This is Flagellin B (flaB) from Helicobacter pylori (strain ATCC 700392 / 26695) (Campylobacter pylori).